Consider the following 958-residue polypeptide: Dermatan-sulfate epimerase (958 aa).

A signal peptide spans 1–22 (MRTHTRGAPSVFFICLFCFVSA). At 23-902 (CVTDENPEVM…APALSASYTR (880 aa)) the chain is on the lumenal side. Asparagine 183 carries N-linked (GlcNAc...) asparagine glycosylation. Histidine 205 (proton donor) is an active-site residue. Tyrosine 261 is an active-site residue. Residues asparagine 336 and asparagine 411 are each glycosylated (N-linked (GlcNAc...) asparagine). Histidine 452 and glutamate 470 together coordinate Mn(2+). Residue tyrosine 473 is part of the active site. Asparagine 481 contributes to the Mn(2+) binding site. 2 N-linked (GlcNAc...) asparagine glycosylation sites follow: asparagine 642 and asparagine 648. The helical transmembrane segment at 903–923 (LFLILNIAIFFVMLAMQLTYF) threads the bilayer. Residues 924–933 (QRAQSLHGQR) are Cytoplasmic-facing. Residues 934 to 954 (CLYAVLLIDSCILLWLYSSCS) form a helical membrane-spanning segment. Residues 955–958 (QSQC) lie on the Lumenal side of the membrane.

This sequence belongs to the dermatan-sulfate isomerase family. The cofactor is Mn(2+). N-glycosylated. Glycosylation is important for enzymatic activity.

The protein resides in the endoplasmic reticulum membrane. It is found in the golgi apparatus membrane. It localises to the cytoplasmic vesicle membrane. Its subcellular location is the microsome membrane. It catalyses the reaction chondroitin 4'-sulfate = dermatan 4'-sulfate. It functions in the pathway glycan metabolism; chondroitin sulfate biosynthesis. The protein operates within glycan metabolism; heparan sulfate biosynthesis. In terms of biological role, converts D-glucuronic acid to L-iduronic acid (IdoUA) residues. Plays an important role in the biosynthesis of the glycosaminoglycan/mucopolysaccharide dermatan sulfate. The sequence is that of Dermatan-sulfate epimerase (DSE) from Bos taurus (Bovine).